We begin with the raw amino-acid sequence, 267 residues long: Glutamate racemase (267 aa).

Residues 13–14 (DS) and 45–46 (YS) contribute to the substrate site. The Proton donor/acceptor role is filled by C77. 78-79 (NT) is a binding site for substrate. C188 functions as the Proton donor/acceptor in the catalytic mechanism. 189–190 (TH) is a binding site for substrate.

The protein belongs to the aspartate/glutamate racemases family.

The catalysed reaction is L-glutamate = D-glutamate. Its pathway is cell wall biogenesis; peptidoglycan biosynthesis. Functionally, provides the (R)-glutamate required for cell wall biosynthesis. The sequence is that of Glutamate racemase from Histophilus somni (strain 129Pt) (Haemophilus somnus).